The following is a 518-amino-acid chain: Histone deacetylase 1 (518 aa).

Positions 22 to 333 (RRVCYFYDAE…WCYETGVALG (312 aa)) are histone deacetylase. Residue His153 is the Proton donor/acceptor of the active site. Residues Asp188, His190, and Asp276 each coordinate Zn(2+). Residues 387 to 518 (HAPSVQFQER…QDQPSVHQKT (132 aa)) form a disordered region. A compositionally biased stretch (acidic residues) spans 401–412 (ELPEQDEDQEDP). Residues 413 to 435 (DERHHADSDVEMDDVKPLDDSGR) are compositionally biased toward basic and acidic residues. A compositionally biased stretch (polar residues) spans 503–518 (DNSNKLQDQPSVHQKT).

This sequence belongs to the histone deacetylase family. HD Type 1 subfamily. As to quaternary structure, interacts with TPR3. Zn(2+) serves as cofactor. Expressed in roots and leaves.

Its subcellular location is the nucleus. The catalysed reaction is N(6)-acetyl-L-lysyl-[histone] + H2O = L-lysyl-[histone] + acetate. Responsible for the deacetylation of lysine residues on the N-terminal part of the core histones (H2A, H2B, H3 and H4). Histone deacetylation gives a tag for epigenetic repression and plays an important role in transcriptional regulation, cell cycle progression and developmental events. Histone deacetylases act via the formation of large multiprotein complexes. Negatively regulates the expression of the NAC48/NAC6 gene that controls root growth in seedlings. Epigenetically represses the expression of NAC48/NAC6 by deacetylating 'Lys-9' (H3K9ac), 'Lys-14' (H3K14ac) and 'Lys-18' (H3K18ac) of histone H3, and 'Lys-5' (H4K5ac), 'Lys-12' (H4K12ac) and 'Lys-16' (H4K16ac) of histone H4. Functions in the regulation of gene expression in the whole genome. Acts as a chromatin remodeling regulator to promote the formation of a repressive chromatin state. Functions with MODD via its interaction with TPR3, to down-regulates the histone acetylation level at BZIP46 target genes. BZIP46 is a positive regulator of abscisic acid (ABA) signaling and drought stress tolerance. The sequence is that of Histone deacetylase 1 from Oryza sativa subsp. japonica (Rice).